A 436-amino-acid chain; its full sequence is Glutamate-1-semialdehyde 2,1-aminomutase (436 aa).

Residue Lys-270 is modified to N6-(pyridoxal phosphate)lysine.

The protein belongs to the class-III pyridoxal-phosphate-dependent aminotransferase family. HemL subfamily. Homodimer. The cofactor is pyridoxal 5'-phosphate.

It localises to the cytoplasm. The catalysed reaction is (S)-4-amino-5-oxopentanoate = 5-aminolevulinate. Its pathway is porphyrin-containing compound metabolism; protoporphyrin-IX biosynthesis; 5-aminolevulinate from L-glutamyl-tRNA(Glu): step 2/2. The chain is Glutamate-1-semialdehyde 2,1-aminomutase from Cutibacterium acnes (strain DSM 16379 / KPA171202) (Propionibacterium acnes).